The sequence spans 227 residues: Flagellar L-ring protein (227 aa).

An N-terminal signal peptide occupies residues 1–15; sequence MRTWAVLPILLMLVG. Cys16 is lipidated: N-palmitoyl cysteine. Cys16 carries S-diacylglycerol cysteine lipidation.

The protein belongs to the FlgH family. As to quaternary structure, the basal body constitutes a major portion of the flagellar organelle and consists of four rings (L,P,S, and M) mounted on a central rod.

It localises to the cell outer membrane. It is found in the bacterial flagellum basal body. In terms of biological role, assembles around the rod to form the L-ring and probably protects the motor/basal body from shearing forces during rotation. The protein is Flagellar L-ring protein of Syntrophotalea carbinolica (strain DSM 2380 / NBRC 103641 / GraBd1) (Pelobacter carbinolicus).